The sequence spans 322 residues: F-actin-capping protein subunit beta (322 aa).

It belongs to the F-actin-capping protein beta subunit family. Component of the F-actin capping complex, composed of a heterodimer of an alpha and a beta subunit.

It localises to the cytoplasm. It is found in the cytoskeleton. The protein localises to the actin patch. In terms of biological role, F-actin-capping proteins bind in a Ca(2+)-independent manner to the fast growing ends of actin filaments (barbed end) thereby blocking the exchange of subunits at these ends. Unlike other capping proteins (such as gelsolin and severin), these proteins do not sever actin filaments. This chain is F-actin-capping protein subunit beta (cap2), found in Aspergillus fumigatus (strain ATCC MYA-4609 / CBS 101355 / FGSC A1100 / Af293) (Neosartorya fumigata).